The chain runs to 237 residues: Ribonuclease PH (237 aa).

Phosphate-binding positions include Arg86 and 124–126; that span reads GTR.

It belongs to the RNase PH family. Homohexameric ring arranged as a trimer of dimers.

It catalyses the reaction tRNA(n+1) + phosphate = tRNA(n) + a ribonucleoside 5'-diphosphate. Functionally, phosphorolytic 3'-5' exoribonuclease that plays an important role in tRNA 3'-end maturation. Removes nucleotide residues following the 3'-CCA terminus of tRNAs; can also add nucleotides to the ends of RNA molecules by using nucleoside diphosphates as substrates, but this may not be physiologically important. Probably plays a role in initiation of 16S rRNA degradation (leading to ribosome degradation) during starvation. This chain is Ribonuclease PH, found in Zymomonas mobilis subsp. mobilis (strain ATCC 31821 / ZM4 / CP4).